Here is a 396-residue protein sequence, read N- to C-terminus: E3 ubiquitin-protein transferase MAEA (396 aa).

The segment at 1-124 (MAVQESAAQL…AAASMWKRKR (124 aa)) is extracellular and involved in cell to cell contact. At threonine 28 the chain carries Phosphothreonine. Residues 121–153 (KRKRMDRMMVEHLLRCGYYNTAVKLARQSGIED) form the LisH domain. The 58-residue stretch at 159–216 (MFLTAKEVEESLERRETATCLAWCHDNKSRLRKMKSCLEFSLRIQEFIELVRQNKRLD) folds into the CTLH domain. The segment at 314–381 (CPVCSRSLNK…QDDKVVCPRT (68 aa)) adopts an RING-Gid-type zinc-finger fold.

As to quaternary structure, identified in the CTLH complex that contains GID4, RANBP9 and/or RANBP10, MKLN1, MAEA, RMND5A (or alternatively its paralog RMND5B), GID8, ARMC8, WDR26 and YPEL5. Within this complex, MAEA, RMND5A (or alternatively its paralog RMND5B), GID8, WDR26, and RANBP9 and/or RANBP10 form the catalytic core, while GID4, MKLN1, ARMC8 and YPEL5 have ancillary roles. Interacts with F-actin. Autoubiquitinated as component of the CTLH E3 ubiquitin-protein ligase complex (in vitro). Detected in embryonic fibroblasts. Detected in macrophages. Detected in heart. liver, spleen and kidney (at protein level).

It localises to the cytoplasm. The protein localises to the nucleus. It is found in the nucleoplasm. Its subcellular location is the nucleus matrix. The protein resides in the cell membrane. It localises to the cytoskeleton. The catalysed reaction is S-ubiquitinyl-[E2 ubiquitin-conjugating enzyme]-L-cysteine + [acceptor protein]-L-lysine = [E2 ubiquitin-conjugating enzyme]-L-cysteine + N(6)-ubiquitinyl-[acceptor protein]-L-lysine.. Its function is as follows. Core component of the CTLH E3 ubiquitin-protein ligase complex that selectively accepts ubiquitin from UBE2H and mediates ubiquitination and subsequent proteasomal degradation of the transcription factor HBP1. MAEA and RMND5A are both required for catalytic activity of the CTLH E3 ubiquitin-protein ligase complex. MAEA is required for normal cell proliferation. The CTLH E3 ubiquitin-protein ligase complex is not required for the degradation of enzymes involved in gluconeogenesis, such as FBP1. Plays a role in erythroblast enucleation during erythrocyte maturation and in the development of mature macrophages. Mediates the attachment of erythroid cell to mature macrophages; this MAEA-mediated contact inhibits erythroid cell apoptosis. Participates in erythroblastic island formation, which is the functional unit of definitive erythropoiesis. Associates with F-actin to regulate actin distribution in erythroblasts and macrophages. May contribute to nuclear architecture and cells division events. This Mus musculus (Mouse) protein is E3 ubiquitin-protein transferase MAEA (Maea).